A 442-amino-acid chain; its full sequence is Enolase 1 (442 aa).

A binds human collagen region spans residues 73–140 (KLIAKEIVGY…YNYLGGFNAH (68 aa)). (2R)-2-phosphoglycerate is bound at residue glutamine 163. Glutamate 205 functions as the Proton donor in the catalytic mechanism. Mg(2+) contacts are provided by aspartate 242, glutamate 290, and aspartate 317. Lysine 342, arginine 371, serine 372, and lysine 393 together coordinate (2R)-2-phosphoglycerate. The active-site Proton acceptor is the lysine 342.

The protein belongs to the enolase family. Requires Mg(2+) as cofactor.

It is found in the cytoplasm. The protein localises to the secreted. Its subcellular location is the cell surface. The catalysed reaction is (2R)-2-phosphoglycerate = phosphoenolpyruvate + H2O. It participates in carbohydrate degradation; glycolysis; pyruvate from D-glyceraldehyde 3-phosphate: step 4/5. Functionally, catalyzes the reversible conversion of 2-phosphoglycerate (2-PG) into phosphoenolpyruvate (PEP). It is essential for the degradation of carbohydrates via glycolysis. 'Moonlights' as a collagen receptor. Binds host (human) collagen, which may contribute to pathogenicity. The polypeptide is Enolase 1 (Lactiplantibacillus plantarum (strain ATCC BAA-793 / NCIMB 8826 / WCFS1) (Lactobacillus plantarum)).